We begin with the raw amino-acid sequence, 2568 residues long: Highly reducing polyketide synthase resH (2568 aa).

The Ketosynthase family 3 (KS3) domain maps to 9 to 437; it reads PEPIAIVGMA…GANAHAILDA (429 aa). Catalysis depends on for beta-ketoacyl synthase activity residues Cys-184, His-319, and His-359. In terms of domain architecture, Malonyl-CoA:ACP transacylase (MAT) spans 549-877; the sequence is FIFTGQGAQW…KLAGSLFLSG (329 aa). Residues 942–1081 are N-terminal hotdog fold; it reads HDLLGSRLPG…TNDQLLWPDD (140 aa). The PKS/mFAS DH domain occupies 942–1244; the sequence is HDLLGSRLPG…FSSLETASSD (303 aa). The active-site Proton acceptor; for dehydratase activity is His-974. The segment at 1091-1244 is C-terminal hotdog fold; that stretch reads NKDSYDRRWY…FSSLETASSD (154 aa). The active-site Proton donor; for dehydratase activity is the Asp-1156. The methyltransferase (CMet) domain stretch occupies residues 1295-1595; sequence VTRLAIRSSA…SGADVVLDDY (301 aa). Residues 1853 to 2154 enclose the Enoyl reductase (ER) domain; sequence GRLDSFYFKE…QEDSVGLAVL (302 aa). In terms of domain architecture, Ketoreductase (KR) spans 2177–2357; the sequence is ASYLLIGCLG…QATSIALGMI (181 aa). A Carrier domain is found at 2485-2563; that stretch reads AVKSAILGLI…GLADQVVSLA (79 aa). O-(pantetheine 4'-phosphoryl)serine is present on Ser-2522.

Pantetheine 4'-phosphate is required as a cofactor.

Its pathway is antifungal biosynthesis. Highly reducing polyketide synthase; part of the gene cluster that mediates the biosynthesis of the tetrahydropyranyl antifungal agent restricticin that acts as an inhibitor of CYP51 and blocks the ergosterol biosynthesis. The highly reducing polyketide synthase resH, the short chain dehydrogenase resG, the cyclase resF, the FAD-dependent monooxygenase resA and the enoylreductase resD are required to generate the first stable intermediate desmethylrestrictinol. ResH with resD biosynthesize the first polyketide chain intermediate that is reduced by resG, followed by epoxidation by resA before 6-endo cyclization via epoxide opening by resF leads to desmethylrestrictinol. The methyltransferase resE then catalyzes the C4 O-methylation of desmethylrestrictinol to produce restrictinol, and the nonribosomal peptide synthetase resC catalyzes the C3 esterification of restrictinol with glycine that leads to restricticin. In Aspergillus sclerotiorum, this protein is Highly reducing polyketide synthase resH.